We begin with the raw amino-acid sequence, 179 residues long: ATP synthase subunit delta (179 aa).

It belongs to the ATPase delta chain family. In terms of assembly, F-type ATPases have 2 components, F(1) - the catalytic core - and F(0) - the membrane proton channel. F(1) has five subunits: alpha(3), beta(3), gamma(1), delta(1), epsilon(1). F(0) has three main subunits: a(1), b(2) and c(10-14). The alpha and beta chains form an alternating ring which encloses part of the gamma chain. F(1) is attached to F(0) by a central stalk formed by the gamma and epsilon chains, while a peripheral stalk is formed by the delta and b chains.

The protein localises to the cell membrane. Functionally, f(1)F(0) ATP synthase produces ATP from ADP in the presence of a proton or sodium gradient. F-type ATPases consist of two structural domains, F(1) containing the extramembraneous catalytic core and F(0) containing the membrane proton channel, linked together by a central stalk and a peripheral stalk. During catalysis, ATP synthesis in the catalytic domain of F(1) is coupled via a rotary mechanism of the central stalk subunits to proton translocation. Its function is as follows. This protein is part of the stalk that links CF(0) to CF(1). It either transmits conformational changes from CF(0) to CF(1) or is implicated in proton conduction. The sequence is that of ATP synthase subunit delta from Clostridium perfringens (strain SM101 / Type A).